We begin with the raw amino-acid sequence, 336 residues long: 3-isopropylmalate dehydrogenase (336 aa).

The substrate site is built by Arg87, Arg97, Arg121, and Asp211. Mg(2+) is bound by residues Asp211, Asp235, and Asp239. An NAD(+)-binding site is contributed by 271–283; that stretch reads GSAPDIAGQGIAD.

This sequence belongs to the isocitrate and isopropylmalate dehydrogenases family. LeuB type 2 subfamily. As to quaternary structure, homodimer. The cofactor is Mg(2+). Requires Mn(2+) as cofactor.

Its subcellular location is the cytoplasm. The enzyme catalyses (2R,3S)-3-isopropylmalate + NAD(+) = 4-methyl-2-oxopentanoate + CO2 + NADH. It functions in the pathway amino-acid biosynthesis; L-leucine biosynthesis; L-leucine from 3-methyl-2-oxobutanoate: step 3/4. Catalyzes the oxidation of 3-carboxy-2-hydroxy-4-methylpentanoate (3-isopropylmalate) to 3-carboxy-4-methyl-2-oxopentanoate. The product decarboxylates to 4-methyl-2 oxopentanoate. The chain is 3-isopropylmalate dehydrogenase from Rhodococcus opacus (strain B4).